The primary structure comprises 363 residues: MKTKYRIAVLPGDGIGPEVMREAYKILNILKNYFSLPIETREFNVGGAAIDQDGVALPKTTLLGCENSDAILFGSXXXXXXXXXXXXXXXXXXXLLPLRKHFNLFGNLRPAQLYSELIHLSPLRSDIINNGFNILCIRELTGGIYFGKPAGRLKKNNIEYAFDTEIYYNYEINRIAHLAFQLAKTRNYKVCSIDKSNVLNSSILWREIVQKVSKNYPDVHLSHLYIDNATMQIIKNPNQFDILLCSNLFGDIISDECAMITGSIGMLPSASLNEKKFGLYEPAGGSAPDIEGKNIANPIAQILSVSMLVRYSMNLKTIADKIDQSVISVLKKGYRTADISNNSHYLKTNEMGDVIASALISGE.

78 to 91 (XXXXXXXXXXXXXX) serves as a coordination point for NAD(+). 4 residues coordinate substrate: R99, R109, R138, and D227. 3 residues coordinate Mg(2+): D227, D251, and D255. NAD(+) is bound at residue 285–297 (GSAPDIEGKNIAN).

This sequence belongs to the isocitrate and isopropylmalate dehydrogenases family. LeuB type 1 subfamily. In terms of assembly, homodimer. The cofactor is Mg(2+). Mn(2+) is required as a cofactor.

The protein resides in the cytoplasm. It catalyses the reaction (2R,3S)-3-isopropylmalate + NAD(+) = 4-methyl-2-oxopentanoate + CO2 + NADH. It participates in amino-acid biosynthesis; L-leucine biosynthesis; L-leucine from 3-methyl-2-oxobutanoate: step 3/4. In terms of biological role, catalyzes the oxidation of 3-carboxy-2-hydroxy-4-methylpentanoate (3-isopropylmalate) to 3-carboxy-4-methyl-2-oxopentanoate. The product decarboxylates to 4-methyl-2 oxopentanoate. The sequence is that of 3-isopropylmalate dehydrogenase from Buchnera aphidicola subsp. Uroleucon solidaginis.